Here is a 563-residue protein sequence, read N- to C-terminus: Minor fimbrium subunit Mfa1 (563 aa).

The N-terminal stretch at 1-19 is a signal peptide; it reads MKLNKMFLVGALLSLGFAS. The N-palmitoyl cysteine moiety is linked to residue Cys-20. Cys-20 carries S-diacylglycerol cysteine lipidation. A propeptide spanning residues 20 to 49 is cleaved from the precursor; the sequence is CSKEGNGPDPDNAAKSYMSMTLSMPMGSAR. Positions 504-543 are disordered; it reads LVPDPDPSNPENPNNPDPNPDEPGTPVPTDPENPLPDQDT. Positions 505 to 537 are enriched in pro residues; it reads VPDPDPSNPENPNNPDPNPDEPGTPVPTDPENP.

Belongs to the bacteroidetes fimbrillin superfamily. Structural component of the fimbrial stalk. Minor fimbriae are composed of a structural subunit, most often Mfa1, and the accessory subunits Mfa3, Mfa4 and Mfa5. Mfa1 interacts with Mfa2; this anchors the fimbrium in the membrane. Fimbrium assembly occurs by linear, head-to-tail oligomerization of fimbrial subunits. This is mediated via insertion of a C-terminal beta-strand from one subunit into a groove in the N-terminal domain of the following subunit. Interacts with S.gordonii ssp5.

It is found in the fimbrium. The protein resides in the cell outer membrane. Its function is as follows. Structural subunit of the minor fimbriae. These filamentous pili are attached to the cell surface; they mediate biofilm formation, adhesion onto host cells and onto other bacteria that are part of the oral microbiome. They play an important role in invasion of periodontal tissues and are recognized as major virulence factors. Mfa1 orthologs from different strains have highly divergent sequences, and this correlates with pathogenicity. This Porphyromonas gingivalis (strain ATCC 33277 / DSM 20709 / CIP 103683 / JCM 12257 / NCTC 11834 / 2561) protein is Minor fimbrium subunit Mfa1.